The following is a 239-amino-acid chain: Ribonuclease PH (239 aa).

Phosphate is bound by residues R86 and 124–126 (GTR).

Belongs to the RNase PH family. As to quaternary structure, homohexameric ring arranged as a trimer of dimers.

The enzyme catalyses tRNA(n+1) + phosphate = tRNA(n) + a ribonucleoside 5'-diphosphate. Phosphorolytic 3'-5' exoribonuclease that plays an important role in tRNA 3'-end maturation. Removes nucleotide residues following the 3'-CCA terminus of tRNAs; can also add nucleotides to the ends of RNA molecules by using nucleoside diphosphates as substrates, but this may not be physiologically important. Probably plays a role in initiation of 16S rRNA degradation (leading to ribosome degradation) during starvation. The protein is Ribonuclease PH of Rhodopseudomonas palustris (strain BisB18).